Here is a 447-residue protein sequence, read N- to C-terminus: Gamma-glutamyl phosphate reductase (447 aa).

It belongs to the gamma-glutamyl phosphate reductase family.

It localises to the cytoplasm. It catalyses the reaction L-glutamate 5-semialdehyde + phosphate + NADP(+) = L-glutamyl 5-phosphate + NADPH + H(+). Its pathway is amino-acid biosynthesis; L-proline biosynthesis; L-glutamate 5-semialdehyde from L-glutamate: step 2/2. In terms of biological role, catalyzes the NADPH-dependent reduction of L-glutamate 5-phosphate into L-glutamate 5-semialdehyde and phosphate. The product spontaneously undergoes cyclization to form 1-pyrroline-5-carboxylate. The chain is Gamma-glutamyl phosphate reductase from Methanosarcina barkeri (strain Fusaro / DSM 804).